We begin with the raw amino-acid sequence, 102 residues long: Small ribosomal subunit protein uS10 (102 aa).

This sequence belongs to the universal ribosomal protein uS10 family. Part of the 30S ribosomal subunit.

In terms of biological role, involved in the binding of tRNA to the ribosomes. This chain is Small ribosomal subunit protein uS10, found in Syntrophotalea carbinolica (strain DSM 2380 / NBRC 103641 / GraBd1) (Pelobacter carbinolicus).